The primary structure comprises 530 residues: uncharacterized protein (530 aa).

This sequence belongs to the mimivirus R640 family.

This is an uncharacterized protein from Acanthamoeba polyphaga (Amoeba).